The sequence spans 231 residues: MEGGRGVTRVLLVDDSPVDRRVVQLLLSSSACAGSFHVIAVDSAKKAMEFLGLKEEGKEQAIDMVLTDYCMPEMTGYELLKAIKALSPLKPIPVIVMSSENEPQRISRCMNAGAEDFIVKPLQSKDVQRLRNCSPANTQCCDAGSDGKPPLLLLPSDHVVVDATAASPPPPPSRRRAHFAGVAMVLHSSSVELSHYFPFLFKFILLVYAILCLGELLHRWSNGCFLNLWCA.

A Response regulatory domain is found at 9 to 135 (RVLLVDDSPV…DVQRLRNCSP (127 aa)). A 4-aspartylphosphate modification is found at D68.

It belongs to the ARR family. Type-A subfamily. In terms of processing, two-component system major event consists of a His-to-Asp phosphorelay between a sensor histidine kinase (HK) and a response regulator (RR). In plants, the His-to-Asp phosphorelay involves an additional intermediate named Histidine-containing phosphotransfer protein (HPt). This multistep phosphorelay consists of a His-Asp-His-Asp sequential transfer of a phosphate group between first a His and an Asp of the HK protein, followed by the transfer to a conserved His of the HPt protein and finally the transfer to an Asp in the receiver domain of the RR protein. As to expression, expressed in roots, leaf blades, leaf sheaths, shoot apex, flowers and panicles.

Functionally, functions as a response regulator involved in His-to-Asp phosphorelay signal transduction system. Phosphorylation of the Asp residue in the receiver domain activates the ability of the protein to promote the transcription of target genes. Type-A response regulators seem to act as negative regulators of the cytokinin signaling. Involved in adventitious (crown) root initiation under the regulation of CRL5. This chain is Two-component response regulator ORR1, found in Oryza sativa subsp. japonica (Rice).